Consider the following 294-residue polypeptide: Phosphatidylglycerol--prolipoprotein diacylglyceryl transferase (294 aa).

7 helical membrane passes run 19-39 (VFGFDLALRWYALAYIVGIVL), 69-89 (LLTWVIVGVILGGRLGYVFFY), 101-121 (ILAVWQGGMAFHGGLLGVIAA), 139-159 (IMALGVPPGLLLGRIANFINA), 195-215 (QLYEAGLEGLILGALLIWLVW), 224-244 (GYVAGVFFAGYGVSRFFVEFF), and 267-287 (WGLTMGQCLSLPMILLGIWLI). R152 is a binding site for a 1,2-diacyl-sn-glycero-3-phospho-(1'-sn-glycerol).

The protein belongs to the Lgt family.

It localises to the cell inner membrane. The catalysed reaction is L-cysteinyl-[prolipoprotein] + a 1,2-diacyl-sn-glycero-3-phospho-(1'-sn-glycerol) = an S-1,2-diacyl-sn-glyceryl-L-cysteinyl-[prolipoprotein] + sn-glycerol 1-phosphate + H(+). It functions in the pathway protein modification; lipoprotein biosynthesis (diacylglyceryl transfer). Catalyzes the transfer of the diacylglyceryl group from phosphatidylglycerol to the sulfhydryl group of the N-terminal cysteine of a prolipoprotein, the first step in the formation of mature lipoproteins. The polypeptide is Phosphatidylglycerol--prolipoprotein diacylglyceryl transferase (Roseobacter denitrificans (strain ATCC 33942 / OCh 114) (Erythrobacter sp. (strain OCh 114))).